Consider the following 124-residue polypeptide: Ribonuclease pancreatic (124 aa).

The segment at 1–24 (KESSAMKFQRQHMDSSGSPSTNAN) is disordered. Residues lysine 7 and arginine 10 each contribute to the substrate site. Histidine 12 (proton acceptor) is an active-site residue. Polar residues predominate over residues 14-24 (DSSGSPSTNAN). Intrachain disulfides connect cysteine 26–cysteine 84, cysteine 40–cysteine 95, cysteine 58–cysteine 110, and cysteine 65–cysteine 72. Asparagine 34 is a glycosylation site (N-linked (GlcNAc...) asparagine). Substrate contacts are provided by residues 41 to 45 (KPVNT), lysine 66, and arginine 85. Residue histidine 119 is the Proton donor of the active site.

The protein belongs to the pancreatic ribonuclease family. Monomer. Interacts with and forms tight 1:1 complexes with RNH1. Dimerization of two such complexes may occur. Interaction with RNH1 inhibits this protein. In terms of tissue distribution, pancreas.

It is found in the secreted. It catalyses the reaction an [RNA] containing cytidine + H2O = an [RNA]-3'-cytidine-3'-phosphate + a 5'-hydroxy-ribonucleotide-3'-[RNA].. The enzyme catalyses an [RNA] containing uridine + H2O = an [RNA]-3'-uridine-3'-phosphate + a 5'-hydroxy-ribonucleotide-3'-[RNA].. Functionally, endonuclease that catalyzes the cleavage of RNA on the 3' side of pyrimidine nucleotides. Acts on single-stranded and double-stranded RNA. In Chinchilla chinchilla (Short-tailed chinchilla), this protein is Ribonuclease pancreatic (RNASE1).